A 62-amino-acid chain; its full sequence is UPF0434 protein RHECIAT_CH0004260 (62 aa).

The protein belongs to the UPF0434 family.

In Rhizobium etli (strain CIAT 652), this protein is UPF0434 protein RHECIAT_CH0004260.